Consider the following 242-residue polypeptide: 4-hydroxy-tetrahydrodipicolinate reductase (242 aa).

NAD(+)-binding positions include 79 to 81 (ATT) and 103 to 106 (SANM). His-135 serves as the catalytic Proton donor/acceptor. Position 136 (His-136) interacts with (S)-2,3,4,5-tetrahydrodipicolinate. Lys-139 functions as the Proton donor in the catalytic mechanism. 145 to 146 (GT) provides a ligand contact to (S)-2,3,4,5-tetrahydrodipicolinate.

Belongs to the DapB family.

The protein localises to the cytoplasm. It catalyses the reaction (S)-2,3,4,5-tetrahydrodipicolinate + NAD(+) + H2O = (2S,4S)-4-hydroxy-2,3,4,5-tetrahydrodipicolinate + NADH + H(+). The enzyme catalyses (S)-2,3,4,5-tetrahydrodipicolinate + NADP(+) + H2O = (2S,4S)-4-hydroxy-2,3,4,5-tetrahydrodipicolinate + NADPH + H(+). It participates in amino-acid biosynthesis; L-lysine biosynthesis via DAP pathway; (S)-tetrahydrodipicolinate from L-aspartate: step 4/4. Its function is as follows. Catalyzes the conversion of 4-hydroxy-tetrahydrodipicolinate (HTPA) to tetrahydrodipicolinate. This is 4-hydroxy-tetrahydrodipicolinate reductase from Staphylococcus carnosus (strain TM300).